Here is a 440-residue protein sequence, read N- to C-terminus: Chromosomal replication initiator protein DnaA (440 aa).

The domain I, interacts with DnaA modulators stretch occupies residues 1 to 69 (MKERILQEIK…VKVVLGNDAT (69 aa)). Residues 69 to 96 (TFEITYEAFEPHSSYSEPLVKKRAVLLT) are domain II. Residues 97–313 (PLNPDYTFEN…GAIIKLLVYK (217 aa)) form a domain III, AAA+ region region. Residues Val108, Asn113, Gly140, Leu141, Gly142, Lys143, Thr144, His145, and Arg300 each contribute to the ADP site. Residue Gly140 coordinates ATP. ATP-binding residues include Gly142, Lys143, and Thr144. Thr144 contributes to the Mg(2+) binding site. The segment at 314–440 (ETTGKEVDLK…GEISRRALSG (127 aa)) is domain IV, binds dsDNA.

Belongs to the DnaA family. Oligomerizes as a right-handed, spiral filament on DNA at oriC.

It localises to the cytoplasm. Plays an essential role in the initiation and regulation of chromosomal replication. ATP-DnaA binds to the origin of replication (oriC) to initiate formation of the DNA replication initiation complex once per cell cycle. Binds the DnaA box (a 9 base pair repeat at the origin) and separates the double-stranded (ds)DNA. Forms a right-handed helical filament on oriC DNA; dsDNA binds to the exterior of the filament while single-stranded (ss)DNA is stabiized in the filament's interior. The ATP-DnaA-oriC complex binds and stabilizes one strand of the AT-rich DNA unwinding element (DUE), permitting loading of DNA polymerase. After initiation quickly degrades to an ADP-DnaA complex that is not apt for DNA replication. Binds acidic phospholipids. Functionally, the DnaA box consensus is 5'-[ATC][AT]AC[CT]TACCA[CT][CTA]-3' in this bacterium. Mutagenesis of residues that line the central pore blocks dsDNA separation. The sequence is that of Chromosomal replication initiator protein DnaA from Thermotoga maritima (strain ATCC 43589 / DSM 3109 / JCM 10099 / NBRC 100826 / MSB8).